The sequence spans 291 residues: 4-diphosphocytidyl-2-C-methyl-D-erythritol kinase (291 aa).

K19 is a catalytic residue. Residue 102-112 (PMGGGIGGGSS) coordinates ATP. The active site involves D144.

It belongs to the GHMP kinase family. IspE subfamily.

It carries out the reaction 4-CDP-2-C-methyl-D-erythritol + ATP = 4-CDP-2-C-methyl-D-erythritol 2-phosphate + ADP + H(+). The protein operates within isoprenoid biosynthesis; isopentenyl diphosphate biosynthesis via DXP pathway; isopentenyl diphosphate from 1-deoxy-D-xylulose 5-phosphate: step 3/6. Its function is as follows. Catalyzes the phosphorylation of the position 2 hydroxy group of 4-diphosphocytidyl-2C-methyl-D-erythritol. The sequence is that of 4-diphosphocytidyl-2-C-methyl-D-erythritol kinase from Ectopseudomonas mendocina (strain ymp) (Pseudomonas mendocina).